Here is an 88-residue protein sequence, read N- to C-terminus: Small ribosomal subunit protein bS18 (88 aa).

The disordered stretch occupies residues 1 to 22; sequence MSTKNAKPKKEAQRRPSRKAKV.

It belongs to the bacterial ribosomal protein bS18 family. In terms of assembly, part of the 30S ribosomal subunit. Forms a tight heterodimer with protein bS6.

Functionally, binds as a heterodimer with protein bS6 to the central domain of the 16S rRNA, where it helps stabilize the platform of the 30S subunit. The sequence is that of Small ribosomal subunit protein bS18 (rpsR) from Thermus thermophilus.